The chain runs to 344 residues: Beta-1,4-galactosyltransferase 4 (344 aa).

Topologically, residues 1-12 (MGCNPPYLLPYR) are cytoplasmic. Residues 13-38 (LRLLLFFTLCLTVVGWVTSNYFVDPI) traverse the membrane as a helical; Signal-anchor for type II membrane protein segment. The Lumenal segment spans residues 39 to 344 (QVIPKAKVFM…NITVDFWTGV (306 aa)). C77 and C118 are joined by a disulfide. UDP-alpha-D-galactose-binding positions include 129–133 (PHRNR), 168–170 (FNR), and 195–196 (VD). A disulfide bridge connects residues C189 and C208. D196 lines the Mn(2+) pocket. N220 carries an N-linked (GlcNAc...) asparagine glycan. UDP-alpha-D-galactose contacts are provided by Y224 and W256. Position 258 to 261 (258 to 261 (GEDD)) interacts with N-acetyl-D-glucosamine. A Mn(2+)-binding site is contributed by H289. 289–291 (HTR) is a UDP-alpha-D-galactose binding site. N-acetyl-D-glucosamine is bound at residue R301. N-linked (GlcNAc...) asparagine glycosylation occurs at N335.

This sequence belongs to the glycosyltransferase 7 family. Mn(2+) is required as a cofactor.

The protein resides in the golgi apparatus. It localises to the golgi stack membrane. It catalyses the reaction N-acetyl-D-glucosamine + UDP-alpha-D-galactose = beta-D-galactosyl-(1-&gt;4)-N-acetyl-D-glucosamine + UDP + H(+). The enzyme catalyses a beta-D-GlcNAc-(1-&gt;3)-beta-D-Gal-(1-&gt;4)-beta-D-Glc-(1&lt;-&gt;1)-Cer(d18:1(4E)) + UDP-alpha-D-galactose = a neolactoside nLc4Cer(d18:1(4E)) + UDP + H(+). It functions in the pathway protein modification; protein glycosylation. Functionally, galactose (Gal) transferase involved in the biosynthesis of glycoproteins, proteoglycans, and glycosyphingolipids. Catalyzes the transfer of Gal residue via a beta1-&gt;4 linkage from UDP-Gal to the non-reducing terminal N-acetyl glucosamine 6-O-sulfate (6-O-sulfoGlcNAc) in the linearly growing chain of both N- and O-linked keratan sulfate proteoglycans. Cooperates with B3GNT7 N-acetyl glucosamine transferase and CHST6 and CHST1 sulfotransferases to construct and elongate mono- and disulfated disaccharide units [-&gt;3Galbeta1-&gt;4(6-sulfoGlcNAcbeta)1-&gt;] and [-&gt;3(6-sulfoGalbeta)1-&gt;4(6-sulfoGlcNAcbeta)1-&gt;] within keratan sulfate polymer. This chain is Beta-1,4-galactosyltransferase 4 (B4GALT4), found in Cricetulus griseus (Chinese hamster).